The chain runs to 406 residues: Peptidase T (406 aa).

A Zn(2+)-binding site is contributed by H78. D80 is a catalytic residue. D139 is a Zn(2+) binding site. E173 acts as the Proton acceptor in catalysis. Residues E174, D196, and H378 each contribute to the Zn(2+) site.

The protein belongs to the peptidase M20B family. The cofactor is Zn(2+).

It localises to the cytoplasm. It carries out the reaction Release of the N-terminal residue from a tripeptide.. Cleaves the N-terminal amino acid of tripeptides. This chain is Peptidase T, found in Clostridium perfringens (strain ATCC 13124 / DSM 756 / JCM 1290 / NCIMB 6125 / NCTC 8237 / Type A).